We begin with the raw amino-acid sequence, 344 residues long: Glycerol-3-phosphate dehydrogenase [NAD(P)+] (344 aa).

5 residues coordinate NADPH: serine 11, tryptophan 12, histidine 32, arginine 33, and lysine 105. 3 residues coordinate sn-glycerol 3-phosphate: lysine 105, glycine 135, and serine 137. Alanine 139 contacts NADPH. Sn-glycerol 3-phosphate contacts are provided by lysine 190, aspartate 243, serine 253, arginine 254, and asparagine 255. Catalysis depends on lysine 190, which acts as the Proton acceptor. Arginine 254 contacts NADPH. Residues valine 278 and glutamate 280 each contribute to the NADPH site.

The protein belongs to the NAD-dependent glycerol-3-phosphate dehydrogenase family.

The protein resides in the cytoplasm. The catalysed reaction is sn-glycerol 3-phosphate + NAD(+) = dihydroxyacetone phosphate + NADH + H(+). It catalyses the reaction sn-glycerol 3-phosphate + NADP(+) = dihydroxyacetone phosphate + NADPH + H(+). It participates in membrane lipid metabolism; glycerophospholipid metabolism. Catalyzes the reduction of the glycolytic intermediate dihydroxyacetone phosphate (DHAP) to sn-glycerol 3-phosphate (G3P), the key precursor for phospholipid synthesis. The chain is Glycerol-3-phosphate dehydrogenase [NAD(P)+] from Oceanobacillus iheyensis (strain DSM 14371 / CIP 107618 / JCM 11309 / KCTC 3954 / HTE831).